The chain runs to 497 residues: 3-octaprenyl-4-hydroxybenzoate carboxy-lyase (497 aa).

Asn-175 provides a ligand contact to Mn(2+). Prenylated FMN-binding positions include 178 to 180 (IYR), 192 to 194 (RWL), and 197 to 198 (RG). Glu-241 contributes to the Mn(2+) binding site. Catalysis depends on Asp-290, which acts as the Proton donor.

It belongs to the UbiD family. Homohexamer. Requires prenylated FMN as cofactor. Mn(2+) serves as cofactor.

The protein localises to the cell membrane. The enzyme catalyses a 4-hydroxy-3-(all-trans-polyprenyl)benzoate + H(+) = a 2-(all-trans-polyprenyl)phenol + CO2. It participates in cofactor biosynthesis; ubiquinone biosynthesis. Its function is as follows. Catalyzes the decarboxylation of 3-octaprenyl-4-hydroxy benzoate to 2-octaprenylphenol, an intermediate step in ubiquinone biosynthesis. The chain is 3-octaprenyl-4-hydroxybenzoate carboxy-lyase from Shigella flexneri.